The primary structure comprises 485 residues: Aerolysin-5 (485 aa).

An N-terminal signal peptide occupies residues 1–23 (MQKLKITGLSLIISGLLMAQRHA). Cystine bridges form between Cys42–Cys98 and Cys182–Cys187. An interaction with host N-linked glycan region spans residues 68 to 84 (WQISGLANGWVIMGPVY). The segment at 256-288 (YGLSEKVTTKNKFKWPLVGETELSIEIAANQSW) is part of the transmembrane beta-barrel after proteolytic activation of the toxin and insertion into the host membrane. The tract at residues 346–355 (RWGGNAWYTH) is interaction with glycans from host GPI-anchor. Residues 446–485 (AADGKAPRALSARRGEQGLRLAIPLECRKSSPGLASATSA) constitute a propeptide that is removed on maturation.

This sequence belongs to the aerolysin family. As to quaternary structure, homodimer in solution; homoheptamer in the host membrane. After binding to GPI-anchored proteins in target membranes and proteolytic removal of the C-terminal propeptide, the protein assembles into a heptameric pre-pore complex. A further conformation change leads to insertion into the host membrane. In terms of processing, proteolytic cleavage and subsequent release of the propeptide trigger a major conformation change, leading to the formation of a heptameric pre-pore that then inserts into the host membrane.

The protein localises to the secreted. It is found in the host cell membrane. Secreted, cytolytic toxin that forms pores in host membranes after proteolytic removal of a C-terminal propeptide, leading to destruction of the membrane permeability barrier and cell death. The pores are formed by transmembrane beta-strands and are approximately 3 nm in diameter. This Aeromonas hydrophila protein is Aerolysin-5 (ahh5).